A 215-amino-acid chain; its full sequence is Cytochrome b6 (215 aa).

A helical transmembrane segment spans residues 32-52; the sequence is IFYCLGGITFTCFLVQVATGF. Cys35 lines the heme c pocket. Heme b-binding residues include His86 and His100. 3 helical membrane-spanning segments follow: residues 90–110, 116–136, and 186–206; these read ASMM…TGGF, STWI…VTGY, and LHTF…FLMI. Positions 187 and 202 each coordinate heme b.

The protein belongs to the cytochrome b family. PetB subfamily. In terms of assembly, the 4 large subunits of the cytochrome b6-f complex are cytochrome b6, subunit IV (17 kDa polypeptide, PetD), cytochrome f and the Rieske protein, while the 4 small subunits are PetG, PetL, PetM and PetN. The complex functions as a dimer. The cofactor is heme b. Heme c serves as cofactor.

It localises to the plastid. It is found in the chloroplast thylakoid membrane. In terms of biological role, component of the cytochrome b6-f complex, which mediates electron transfer between photosystem II (PSII) and photosystem I (PSI), cyclic electron flow around PSI, and state transitions. The protein is Cytochrome b6 of Tetradesmus obliquus (Green alga).